The primary structure comprises 100 residues: MLVMNLQLFAHKKGVGSSKNGRDSEAKRLGVKCSDGQFVLAGNILVRQRGTKIHPGLNVGRGGDDTLFAKIDGVVKYERLGRDKKKASVYPVEVEKVVAE.

The propeptide occupies 1 to 9 (MLVMNLQLF).

The protein belongs to the bacterial ribosomal protein bL27 family. Post-translationally, the N-terminus is cleaved by ribosomal processing cysteine protease Prp.

The chain is Large ribosomal subunit protein bL27 from Clostridium botulinum (strain 657 / Type Ba4).